Consider the following 149-residue polypeptide: UPF0310 protein msl3206 (149 aa).

It belongs to the UPF0310 family.

The protein is UPF0310 protein msl3206 of Mesorhizobium japonicum (strain LMG 29417 / CECT 9101 / MAFF 303099) (Mesorhizobium loti (strain MAFF 303099)).